The sequence spans 246 residues: 3'(2'),5'-bisphosphate nucleotidase CysQ (246 aa).

Mg(2+)-binding residues include E64, D83, L85, D86, and D205. E64 contacts substrate. Substrate-binding positions include 85-88 (LDGT) and D205.

The protein belongs to the inositol monophosphatase superfamily. CysQ family. Mg(2+) serves as cofactor.

The protein localises to the cell inner membrane. It carries out the reaction adenosine 3',5'-bisphosphate + H2O = AMP + phosphate. Converts adenosine-3',5'-bisphosphate (PAP) to AMP. This is 3'(2'),5'-bisphosphate nucleotidase CysQ from Salmonella typhimurium (strain LT2 / SGSC1412 / ATCC 700720).